The chain runs to 298 residues: MPTRMITNDEVTLWSEGLGDPADAPLLLIAGGNLSAKSWPDEFVERLVAAGHFVIRYDHRDTGRSSRCDFALHPYGFDELAADALAVLDGWQVRAAHVVGMSLGNTIGQLLALDAPERLLTLTVMLGGALDVDFDADLEAALKGEPSVSGLPVPSQRFLDMMTMLQQPAETDEELLERRVEKWRLLNGEGVPFDADEFRRRELLAAGHAGTFDEPIVHHMIPLPPVSRGAELSRVTTPVLAIQAMCDPAAPPPHARHLANRIPGARVVEIENMGHALPLAVHEPLAAAICAHTRAATV.

In terms of domain architecture, AB hydrolase-1 spans 25–277; the sequence is PLLLIAGGNL…VEIENMGHAL (253 aa).

Belongs to the methyl esterase DnrP family.

The enzyme catalyses rhodomycin D + H2O = 10-carboxy-13-deoxycarminomycin + methanol + H(+). The catalysed reaction is 4-O-methylrhodomycin D + H2O = 10-carboxy-13-deoxydaunorubicin + methanol + H(+). It functions in the pathway antibiotic biosynthesis; daunorubicin biosynthesis. Its pathway is antibiotic biosynthesis; carminomycin biosynthesis. Involved in the biosynthesis of the anthracyclines carminomycin and daunorubicin (daunomycin) which are aromatic polyketide antibiotics that exhibit high cytotoxicity and are widely applied in the chemotherapy of a variety of cancers. Catalyzes the removal of methyl group from the carbomethoxy group of rhodomycin D (10-carbomethoxy-13-deoxycarminomycin) and 4-O-methylrhodomycin D to yield 10-carboxy-13-deoxycarminomycin and 10-carboxy-13-deoxydaunorubicin, respectively. Could be also involved in the decarboxylation of 10-carboxy-13-deoxycarminomycin and 10-carboxy-13-deoxydaunorubicin to yield 13-deoxycarminomycin and 13-deoxydaunorubicin, respectively. It seems that DnrK may influence the ability of DnrP to carry out the decarboxylation. This chain is Rhodomycin D methylesterase DnrP (dnrP), found in Streptomyces peucetius.